A 483-amino-acid polypeptide reads, in one-letter code: Uroporphyrinogen-III C-methyltransferase (483 aa).

This sequence belongs to the precorrin methyltransferase family.

It catalyses the reaction uroporphyrinogen III + 2 S-adenosyl-L-methionine = precorrin-2 + 2 S-adenosyl-L-homocysteine + H(+). In Bacillus subtilis (strain 168), this protein is Uroporphyrinogen-III C-methyltransferase (nasF).